A 73-amino-acid polypeptide reads, in one-letter code: Neutrophil elastase 2B (73 aa).

Positions Ile1–Leu73 constitute a Peptidase S1 domain. Catalysis depends on Ser64, which acts as the Charge relay system.

Belongs to the peptidase S1 family. Elastase subfamily.

Its function is as follows. May be involved in the degradation of connective tissue in chronic lung disease. This is Neutrophil elastase 2B from Equus caballus (Horse).